A 417-amino-acid polypeptide reads, in one-letter code: D-amino acid dehydrogenase (417 aa).

3–17 (IIVLGAGVIGVTSAY) serves as a coordination point for FAD.

This sequence belongs to the DadA oxidoreductase family. FAD serves as cofactor.

It carries out the reaction a D-alpha-amino acid + A + H2O = a 2-oxocarboxylate + AH2 + NH4(+). It functions in the pathway amino-acid degradation; D-alanine degradation; NH(3) and pyruvate from D-alanine: step 1/1. Oxidative deamination of D-amino acids. The sequence is that of D-amino acid dehydrogenase from Azorhizobium caulinodans (strain ATCC 43989 / DSM 5975 / JCM 20966 / LMG 6465 / NBRC 14845 / NCIMB 13405 / ORS 571).